The following is a 339-amino-acid chain: UDP-N-acetylglucosamine/UDP-N-acetylgalactosamine transporter nstp-4 (339 aa).

Transmembrane regions (helical) follow at residues 44–64 (LSST…FFVI), 94–114 (LKVA…FFAL), 148–168 (YNWM…YPSG), 186–206 (ILGL…GVYF), 224–244 (LAFF…WQAI), 255–275 (GVIW…ALVV), 281–301 (ILKG…SWLV), and 305–325 (LTIT…TFLY).

Belongs to the nucleotide-sugar transporter family. SLC35A subfamily. Widely expressed, including in pharynx and pharyngeal gland cells, seam cells, spermatheca, stomatointestinal muscle, vulva, and body wall muscle.

The protein resides in the golgi apparatus membrane. Uridine diphosphate-N-acetylglucosamine (UDP-GlcNAc) transporter in the Golgi apparatus. UDP-N-acetylgalactosamine (UDP-GalNAc) transporter in the Golgi apparatus. Apparently transports UDP-GlcNAc and UDP-GalNAc simultaneously, and independently, by an unknown mechanism. Functions redundantly with nucleotide sugar transporter srf-3. May be involved in gonadal development. This is UDP-N-acetylglucosamine/UDP-N-acetylgalactosamine transporter nstp-4 from Caenorhabditis elegans.